The primary structure comprises 161 residues: NADH-quinone oxidoreductase subunit I (161 aa).

4Fe-4S ferredoxin-type domains follow at residues 52-82 and 92-121; these read LRRYPNGEERCIACKLCEAICPAMAITIESE and SRYDIDLTKCIFCGFCEEACPVDAVVETRV. Residues Cys-62, Cys-65, Cys-68, Cys-72, Cys-101, Cys-104, Cys-107, and Cys-111 each contribute to the [4Fe-4S] cluster site.

It belongs to the complex I 23 kDa subunit family. As to quaternary structure, NDH-1 is composed of 14 different subunits. Subunits NuoA, H, J, K, L, M, N constitute the membrane sector of the complex. [4Fe-4S] cluster is required as a cofactor.

The protein localises to the cell inner membrane. The catalysed reaction is a quinone + NADH + 5 H(+)(in) = a quinol + NAD(+) + 4 H(+)(out). Its function is as follows. NDH-1 shuttles electrons from NADH, via FMN and iron-sulfur (Fe-S) centers, to quinones in the respiratory chain. The immediate electron acceptor for the enzyme in this species is believed to be ubiquinone. Couples the redox reaction to proton translocation (for every two electrons transferred, four hydrogen ions are translocated across the cytoplasmic membrane), and thus conserves the redox energy in a proton gradient. This Azoarcus sp. (strain BH72) protein is NADH-quinone oxidoreductase subunit I.